The primary structure comprises 483 residues: Bromoperoxidase-catalase (483 aa).

The segment at 1-24 is disordered; that stretch reads MTQGPLTTEAGAPVADNQNSETAG. Residues H54 and N127 contribute to the active site. Position 337 (Y337) interacts with heme.

The protein belongs to the catalase family.

It catalyses the reaction 2 H2O2 = O2 + 2 H2O. The polypeptide is Bromoperoxidase-catalase (bca) (Streptomyces venezuelae (strain ATCC 10712 / CBS 650.69 / DSM 40230 / JCM 4526 / NBRC 13096 / PD 04745)).